The sequence spans 591 residues: L-fucose isomerase (591 aa).

Catalysis depends on proton acceptor residues Glu-337 and Asp-361. Residues Glu-337, Asp-361, and His-528 each coordinate Mn(2+).

Belongs to the L-fucose isomerase family. As to quaternary structure, homohexamer. It depends on Mn(2+) as a cofactor.

The protein resides in the cytoplasm. The enzyme catalyses L-fucose = L-fuculose. It functions in the pathway carbohydrate degradation; L-fucose degradation; L-lactaldehyde and glycerone phosphate from L-fucose: step 1/3. In terms of biological role, converts the aldose L-fucose into the corresponding ketose L-fuculose. This Salmonella heidelberg (strain SL476) protein is L-fucose isomerase.